The chain runs to 305 residues: Small ribosomal subunit biogenesis GTPase RsgA (305 aa).

Positions 67-224 (SSELVRPAVA…VADTPGFSSF (158 aa)) constitute a CP-type G domain. GTP contacts are provided by residues 116–119 (NKID) and 166–174 (GQSGVGKST). Zn(2+) contacts are provided by C248, C253, H255, and C261.

This sequence belongs to the TRAFAC class YlqF/YawG GTPase family. RsgA subfamily. As to quaternary structure, monomer. Associates with 30S ribosomal subunit, binds 16S rRNA. The cofactor is Zn(2+).

It localises to the cytoplasm. Functionally, one of several proteins that assist in the late maturation steps of the functional core of the 30S ribosomal subunit. Helps release RbfA from mature subunits. May play a role in the assembly of ribosomal proteins into the subunit. Circularly permuted GTPase that catalyzes slow GTP hydrolysis, GTPase activity is stimulated by the 30S ribosomal subunit. The chain is Small ribosomal subunit biogenesis GTPase RsgA from Ruminiclostridium cellulolyticum (strain ATCC 35319 / DSM 5812 / JCM 6584 / H10) (Clostridium cellulolyticum).